Consider the following 77-residue polypeptide: Conotoxin Ar5.1 b (77 aa).

A signal peptide spans 1-19 (MLCLPVFIILLLLASPAAS). The propeptide occupies 20 to 44 (NPLKTRIQSDLIRAALEDADMKNEK).

This sequence belongs to the conotoxin T superfamily. In terms of processing, contains 2 disulfide bonds that can be either 'C1-C3, C2-C4' or 'C1-C4, C2-C3', since these disulfide connectivities have been observed for conotoxins with cysteine framework V (for examples, see AC P0DQQ7 and AC P81755). In terms of tissue distribution, expressed by the venom duct.

It localises to the secreted. The chain is Conotoxin Ar5.1 b from Conus arenatus (Sand-dusted cone).